We begin with the raw amino-acid sequence, 325 residues long: Lactonase drp35 (325 aa).

Ca(2+)-binding residues include glutamate 46, serine 108, glycine 110, glutamate 128, threonine 131, tyrosine 133, aspartate 136, asparagine 183, aspartate 234, and serine 235. Aspartate 234 functions as the Proton donor in the catalytic mechanism.

It belongs to the SMP-30/CGR1 family. Ca(2+) is required as a cofactor.

The protein resides in the cytoplasm. In terms of biological role, exhibits lactonase activity. Acts in cells with perturbed membrane integrity and is possibly related to the membrane homeostasis. The sequence is that of Lactonase drp35 (drp35) from Staphylococcus haemolyticus (strain JCSC1435).